Here is a 319-residue protein sequence, read N- to C-terminus: Cytochrome f (319 aa).

The signal sequence occupies residues 1 to 35 (MQNRNISYWIKKCVIQSISIVILMKIIAWPSISEA). Tyrosine 36, cysteine 56, cysteine 59, and histidine 60 together coordinate heme. The chain crosses the membrane as a helical span at residues 285–305 (VQSLLVFFVSVTLAQIFLVLK).

This sequence belongs to the cytochrome f family. The 4 large subunits of the cytochrome b6-f complex are cytochrome b6, subunit IV (17 kDa polypeptide, petD), cytochrome f and the Rieske protein, while the 4 small subunits are PetG, PetL, PetM and PetN. The complex functions as a dimer. The cofactor is heme.

It is found in the plastid. It localises to the chloroplast thylakoid membrane. Functionally, component of the cytochrome b6-f complex, which mediates electron transfer between photosystem II (PSII) and photosystem I (PSI), cyclic electron flow around PSI, and state transitions. The polypeptide is Cytochrome f (Physcomitrium patens (Spreading-leaved earth moss)).